Consider the following 160-residue polypeptide: Cytochrome b6-f complex subunit 4 (160 aa).

The Cytoplasmic segment spans residues 1–35 (MATLKKPDLSDPKLRAKLAKGMGHNYYGEPAWPND). Residues 36–56 (LLYVFPVVIMGTFACIVALSV) form a helical membrane-spanning segment. Residues 57–94 (LDPAMVGEPADPFATPLEILPEWYLYPVFQILRSVPNK) lie on the Lumenal, thylakoid side of the membrane. Residues 95-115 (LLGVLLMASVPLGLILVPFIE) form a helical membrane-spanning segment. At 116-130 (NVNKFQNPFRRPVAT) the chain is on the cytoplasmic side. Residues 131–151 (TIFLFGTLVTIWLGIGATFPL) traverse the membrane as a helical segment. Residues 152 to 160 (DKTLTLGLF) are Lumenal, thylakoid-facing.

Belongs to the cytochrome b family. PetD subfamily. The 4 large subunits of the cytochrome b6-f complex are cytochrome b6, subunit IV (17 kDa polypeptide, PetD), cytochrome f and the Rieske protein, while the 4 small subunits are PetG, PetL, PetM and PetN. The complex functions as a dimer.

Its subcellular location is the cellular thylakoid membrane. In terms of biological role, component of the cytochrome b6-f complex, which mediates electron transfer between photosystem II (PSII) and photosystem I (PSI), cyclic electron flow around PSI, and state transitions. In Mastigocladus laminosus (Fischerella sp.), this protein is Cytochrome b6-f complex subunit 4.